Reading from the N-terminus, the 105-residue chain is MLLLPGSHVKIVREVNKVPNIKSAMKRVELTRIRTLRNKAIKSSVKTAIKKFRTALEQGDNHNAAVNLRQAIRAIDKAVTKGVLHPNTAARKKSSLQRYFNKTTA.

Belongs to the bacterial ribosomal protein bS20 family.

Functionally, binds directly to 16S ribosomal RNA. The chain is Small ribosomal subunit protein bS20 from Moorella thermoacetica (strain ATCC 39073 / JCM 9320).